We begin with the raw amino-acid sequence, 202 residues long: Arenicin-1 (202 aa).

The N-terminal stretch at 1 to 25 (MTSTQSVAVCATLILAIFCVNDIHC) is a signal peptide. Residues 26–181 (DPIAEARAAA…SGDNNEPEKR (156 aa)) constitute a propeptide that is removed on maturation. The BRICHOS domain maps to 73-168 (GDGVEGSVMV…ACQGKSVYWL (96 aa)). Cystine bridges form between cysteine 100-cysteine 160 and cysteine 184-cysteine 201.

Functionally, has antimicrobial activity against the Gram-negative bacteria E.coli and P.mirabilis, the Gram-positive bacterium L.monocytogenes and the yeast C.albicans. This is Arenicin-1 from Arenicola marina (Lugworm).